A 66-amino-acid chain; its full sequence is Large ribosomal subunit protein bL33c (66 aa).

This sequence belongs to the bacterial ribosomal protein bL33 family.

The protein resides in the plastid. It localises to the chloroplast. This Chloranthus spicatus (Chulantree) protein is Large ribosomal subunit protein bL33c.